A 321-amino-acid chain; its full sequence is Lipoyl synthase (321 aa).

Residues Cys68, Cys73, Cys79, Cys94, Cys98, Cys101, and Ser308 each coordinate [4Fe-4S] cluster. Residues 80–297 form the Radical SAM core domain; sequence FNHGTATFMI…KVLADELGFT (218 aa).

Belongs to the radical SAM superfamily. Lipoyl synthase family. It depends on [4Fe-4S] cluster as a cofactor.

It is found in the cytoplasm. The catalysed reaction is [[Fe-S] cluster scaffold protein carrying a second [4Fe-4S](2+) cluster] + N(6)-octanoyl-L-lysyl-[protein] + 2 oxidized [2Fe-2S]-[ferredoxin] + 2 S-adenosyl-L-methionine + 4 H(+) = [[Fe-S] cluster scaffold protein] + N(6)-[(R)-dihydrolipoyl]-L-lysyl-[protein] + 4 Fe(3+) + 2 hydrogen sulfide + 2 5'-deoxyadenosine + 2 L-methionine + 2 reduced [2Fe-2S]-[ferredoxin]. It functions in the pathway protein modification; protein lipoylation via endogenous pathway; protein N(6)-(lipoyl)lysine from octanoyl-[acyl-carrier-protein]: step 2/2. In terms of biological role, catalyzes the radical-mediated insertion of two sulfur atoms into the C-6 and C-8 positions of the octanoyl moiety bound to the lipoyl domains of lipoate-dependent enzymes, thereby converting the octanoylated domains into lipoylated derivatives. The sequence is that of Lipoyl synthase from Shewanella sp. (strain MR-7).